The chain runs to 668 residues: Transketolase (668 aa).

Residue histidine 28 coordinates substrate. Thiamine diphosphate is bound by residues histidine 68 and 116–118 (GPL). Aspartate 157 lines the Mg(2+) pocket. Residues glycine 158 and asparagine 187 each coordinate thiamine diphosphate. The Mg(2+) site is built by asparagine 187 and isoleucine 189. The substrate site is built by histidine 263, arginine 358, and serine 385. Histidine 263 contributes to the thiamine diphosphate binding site. Glutamate 412 serves as the catalytic Proton donor. Phenylalanine 438 is a thiamine diphosphate binding site. Substrate-binding residues include histidine 462, aspartate 470, histidine 474, and arginine 521.

It belongs to the transketolase family. As to quaternary structure, homodimer. It depends on Mg(2+) as a cofactor. Thiamine diphosphate is required as a cofactor.

It catalyses the reaction D-sedoheptulose 7-phosphate + D-glyceraldehyde 3-phosphate = aldehydo-D-ribose 5-phosphate + D-xylulose 5-phosphate. In terms of biological role, catalyzes the transfer of a two-carbon ketol group from a ketose donor to an aldose acceptor, likely via a covalent intermediate with the cofactor thiamine pyrophosphate. Can use L-erythrulose as donor and D-ribose-5-phosphate as acceptor substrates, forming glycolaldehyde and D-sedoheptulose-7-phosphate. For synthetic purposes, is able to use hydroxypyruvate (HPA) as donor substrate, making the reaction irreversible due to the release of carbon dioxide, and various aldehydes as acceptor substrates, which leads to the corresponding ketoses. Thus, using hydroxypyruvate as donor and three different aldehydes as acceptors, i.e. glycolaldehyde, D-glyceraldehyde and butyraldehyde, the enzyme stereoselectively forms the corresponding products L-erythrulose, D-xylulose and (3S)-1,3-dihydroxyhexan-2-one, respectively. The polypeptide is Transketolase (Geobacillus stearothermophilus (Bacillus stearothermophilus)).